We begin with the raw amino-acid sequence, 166 residues long: uncharacterized protein (166 aa).

Basic and acidic residues-rich tracts occupy residues 1-13, 21-112, and 119-137; these read MAEVSKKRCEHNS, KAND…KTKE, and DNVENKDKNEVYENIKEGG. Residues 1–144 are disordered; that stretch reads MAEVSKKRCE…EGGSKAWNKT (144 aa). 8 tandem repeats follow at residues 31–41, 42–52, 53–63, 64–74, 75–85, 86–96, 97–107, and 108–118. The 8 X 11 AA approximate tandem repeats of D-K-T-K-E-T-A-G/E-S-A-K stretch occupies residues 31–118; the sequence is DKTKETAGSA…KTKETAGNVR (88 aa).

Belongs to the LEA type 1 family.

This is an uncharacterized protein from Encephalitozoon cuniculi (strain GB-M1) (Microsporidian parasite).